Here is a 228-residue protein sequence, read N- to C-terminus: Pyridoxamine 5'-phosphate oxidase (228 aa).

20-23 lines the pyridoxal 5'-phosphate pocket; it reads QYDK. Residue Lys-29 forms a Glycyl lysine isopeptide (Lys-Gly) (interchain with G-Cter in ubiquitin) linkage. 73–76 contributes to the FMN binding site; it reads RILL. A pyridoxal 5'-phosphate-binding site is contributed by Lys-78. FMN-binding positions include 88–89, 95–96, and Gln-118; these read YS and RK. Residues Tyr-136, Arg-140, and Ser-144 each contribute to the pyridoxal 5'-phosphate site. Residues 153 to 154 and Trp-199 each bind FMN; that span reads QS. 205–207 lines the pyridoxal 5'-phosphate pocket; that stretch reads RLH. Arg-209 provides a ligand contact to FMN.

Belongs to the pyridoxamine 5'-phosphate oxidase family. In terms of assembly, homodimer. Requires FMN as cofactor.

The protein localises to the mitochondrion intermembrane space. It carries out the reaction pyridoxamine 5'-phosphate + O2 + H2O = pyridoxal 5'-phosphate + H2O2 + NH4(+). The enzyme catalyses pyridoxine 5'-phosphate + O2 = pyridoxal 5'-phosphate + H2O2. Its pathway is cofactor metabolism; pyridoxal 5'-phosphate salvage; pyridoxal 5'-phosphate from pyridoxamine 5'-phosphate: step 1/1. It participates in cofactor metabolism; pyridoxal 5'-phosphate salvage; pyridoxal 5'-phosphate from pyridoxine 5'-phosphate: step 1/1. Functionally, catalyzes the oxidation of either pyridoxine 5'-phosphate (PNP) or pyridoxamine 5'-phosphate (PMP) into pyridoxal 5'-phosphate (PLP). The sequence is that of Pyridoxamine 5'-phosphate oxidase (PDX3) from Saccharomyces cerevisiae (strain ATCC 204508 / S288c) (Baker's yeast).